The sequence spans 688 residues: Glycine--tRNA ligase beta subunit (688 aa).

The protein belongs to the class-II aminoacyl-tRNA synthetase family. Tetramer of two alpha and two beta subunits.

It localises to the cytoplasm. The enzyme catalyses tRNA(Gly) + glycine + ATP = glycyl-tRNA(Gly) + AMP + diphosphate. The polypeptide is Glycine--tRNA ligase beta subunit (Haemophilus influenzae (strain PittGG)).